A 453-amino-acid chain; its full sequence is MELLKLNRSAQGSGAGPGASLCRAGGALLNSSGAGNLSCEPPRLRGAGTRELELAIRVTLYAVIFLMSVGGNVLIIVVLGLSRRLRTVTNAFLLSLAVSDLLLAVACMPFTLLPNLMGTFIFGTVVCKAVSYLMGVSVSVSTLSLVAIALERYSAICRPLQARVWQTRSHAARVIIATWMLSGLLMVPYPVYTAVQPAGGARALQCVHRWPSARVRQTWSVLLLLLLFFVPGVVMAVAYGLISRELYLGLRFDEDSDSESRVRSQGGLRGGAGPGPAPPNGSCRPEGGLAGEDGDGCYVQLPRSRQTLELSALTAPTPGPGGGPRPYQAKLLAKKRVVRMLLVIVVLFFLCWLPLYSANTWRAFDSSGAHRALSGAPISFIHLLSYASACVNPLVYCFMHRRFRQACLETCARCCPRPPRARPRPLPDEDPPTPSIASLSRLSYTTISTLGPG.

Over Met-1–Arg-57 the chain is Extracellular. N-linked (GlcNAc...) asparagine glycosylation is found at Asn-7, Asn-30, and Asn-36. Residues Val-58–Leu-79 form a helical membrane-spanning segment. Residues Gly-80–Thr-87 lie on the Cytoplasmic side of the membrane. The helical transmembrane segment at Val-88–Pro-109 threads the bilayer. At Phe-110–Ser-131 the chain is on the extracellular side. Cys-127 and Cys-206 are joined by a disulfide. Residues Tyr-132–Leu-150 form a helical membrane-spanning segment. The Cytoplasmic segment spans residues Glu-151 to His-170. A helical membrane pass occupies residues Ala-171–Tyr-189. The Extracellular segment spans residues Pro-190–Ser-220. Residues Val-221–Ser-243 form a helical membrane-spanning segment. Residues Arg-244–Arg-339 are Cytoplasmic-facing. A disordered region spans residues Ser-258–Glu-286. Residues Met-340–Trp-361 form a helical membrane-spanning segment. The Extracellular portion of the chain corresponds to Arg-362–Ser-379. The chain crosses the membrane as a helical span at residues Phe-380–His-400. At Arg-401–Gly-453 the chain is on the cytoplasmic side. A lipid anchor (S-palmitoyl cysteine) is attached at Cys-414. The disordered stretch occupies residues Arg-422–Gly-453. Over residues Ser-435–Gly-453 the composition is skewed to polar residues.

This sequence belongs to the G-protein coupled receptor 1 family. Parietal cells, pancreas, brain and various neoplastic tissues.

It localises to the cell membrane. Receptor for gastrin and cholecystokinin. The CCK-B receptors occur throughout the central nervous system where they modulate anxiety, analgesia, arousal, and neuroleptic activity. This receptor mediates its action by association with G proteins that activate a phosphatidylinositol-calcium second messenger system. This is Gastrin/cholecystokinin type B receptor (CCKBR) from Canis lupus familiaris (Dog).